A 92-amino-acid chain; its full sequence is Protein S100-A12 (92 aa).

2 consecutive EF-hand domains span residues 13-48 (NIFH…LKNT) and 49-84 (KDQG…VLIT). H16 contributes to the Cu cation binding site. H16 is a binding site for Zn(2+). Ca(2+) contacts are provided by S19 and H24. D26 contributes to the Cu cation binding site. D26 lines the Zn(2+) pocket. Residues T27 and E32 each coordinate Ca(2+). Residues 38-53 (TKELPNTLKNTKDQGT) are hinge domain. The Ca(2+) site is built by D62, N64, D66, Q68, and E73. Residues H86 and H90 each contribute to the Cu cation site. Residues H86 and H90 each coordinate Zn(2+).

It belongs to the S-100 family. In terms of assembly, homodimer. Homooligomer (tetramer or hexamer) in the presence of calcium, zinc and copper ions. Interacts with AGER and both calcium and zinc are essential for the interaction. Interacts with CACYBP in a calcium-dependent manner. In terms of tissue distribution, found essentially in granulocytes with small amounts found in lymphocytes.

It localises to the secreted. Its subcellular location is the cytoplasm. The protein resides in the cytoskeleton. It is found in the cell membrane. In terms of biological role, S100A12 is a calcium-, zinc- and copper-binding protein which plays a prominent role in the regulation of inflammatory processes and immune response. Its pro-inflammatory activity involves recruitment of leukocytes, promotion of cytokine and chemokine production, and regulation of leukocyte adhesion and migration. Acts as an alarmin or a danger associated molecular pattern (DAMP) molecule and stimulates innate immune cells via binding to receptor for advanced glycation endproducts (AGER). Binding to AGER activates the MAP-kinase and NF-kappa-B signaling pathways leading to production of pro-inflammatory cytokines and up-regulation of cell adhesion molecules ICAM1 and VCAM1. Acts as a monocyte and mast cell chemoattractant. Can stimulate mast cell degranulation and activation which generates chemokines, histamine and cytokines inducing further leukocyte recruitment to the sites of inflammation. Can inhibit the activity of matrix metalloproteinases; MMP2, MMP3 and MMP9 by chelating Zn(2+) from their active sites. The protein is Protein S100-A12 (S100A12) of Sus scrofa (Pig).